A 785-amino-acid chain; its full sequence is Solute carrier family 45 member 4 (785 aa).

Residues 1–43 form a disordered region; the sequence is MKMAPQNADSESMQVQELPVPLPDPQKPRDPEAETQEETTSEG. A run of 6 helical transmembrane segments spans residues 64 to 84, 87 to 107, 124 to 144, 156 to 176, 197 to 217, and 234 to 254; these read EFCYAMETALVTPILLQIGLP, YYSLTWFLSPVLGLIFTPLIG, ILALCVGVLIGVALFLNGSAI, PIGIVLTVLGVVVLDFSADAT, LNIHAFSAGLGGAIGYVLGGL, and VLFFFAAVIFSVSVALHLFSI. Disordered stretches follow at residues 259–309 and 401–430; these read YSPQ…VQSE and KVPNGRGSPPINSLSRSKVDLKPSVTSGSM. Phosphoserine occurs at positions 442 and 472. The tract at residues 478 to 505 is disordered; the sequence is DLQQRQRSRHRNQSGATASSGDTESEEG. The span at 490 to 499 shows a compositional bias: low complexity; the sequence is QSGATASSGD. A Phosphoserine modification is found at Ser-502. A run of 6 helical transmembrane segments spans residues 525–545, 577–597, 609–629, 631–651, 683–703, and 709–729; these read LMWLCLCHLLTWFSVIAEAVF, MGCWGLVIYAATGAICSALLQ, IIYMLGTLGFSVGTAVMAMFP, VYVAMVTISTMGVVSMSISYC, ILSCQVYISQILVASALGGVV, and IVVIPIVASVGSFLGFLTATF. The tract at residues 741–772 is disordered; sequence KEEQKGLSSGPAGEGEGGAGSEKPTVLKLSRK. Ser-749 is modified (phosphoserine).

Belongs to the glycoside-pentoside-hexuronide (GPH) cation symporter transporter (TC 2.A.2) family. In terms of tissue distribution, ubiquitously expressed.

The protein resides in the membrane. It carries out the reaction sucrose(out) + H(+)(out) = sucrose(in) + H(+)(in). Functionally, proton-associated sucrose transporter. May be able to transport also glucose and fructose. In Mus musculus (Mouse), this protein is Solute carrier family 45 member 4 (Slc45a4).